The sequence spans 538 residues: Phosphoenolpyruvate carboxykinase (ATP) (538 aa).

R64, Y205, and K211 together coordinate substrate. Residues K211, H230, and 246-254 each bind ATP; that span reads GLSGTGKTT. Positions 211 and 230 each coordinate Mn(2+). D267 contributes to the Mn(2+) binding site. Residues E295, R331, 447–448, and T453 contribute to the ATP site; that span reads RI. R331 is a binding site for substrate.

It belongs to the phosphoenolpyruvate carboxykinase (ATP) family. As to quaternary structure, monomer. It depends on Mn(2+) as a cofactor.

It is found in the cytoplasm. The catalysed reaction is oxaloacetate + ATP = phosphoenolpyruvate + ADP + CO2. It functions in the pathway carbohydrate biosynthesis; gluconeogenesis. Involved in the gluconeogenesis. Catalyzes the conversion of oxaloacetate (OAA) to phosphoenolpyruvate (PEP) through direct phosphoryl transfer between the nucleoside triphosphate and OAA. The polypeptide is Phosphoenolpyruvate carboxykinase (ATP) (Haemophilus influenzae (strain PittGG)).